Here is a 242-residue protein sequence, read N- to C-terminus: ATP synthase subunit a (242 aa).

The next 6 helical transmembrane spans lie at 29–49 (SAVAMIFVSIAASLLLIIAFV), 83–103 (VFFPLILTLFLFISLGNIIGM), 114–134 (IIVTFSLAMIVFTTTLVYGIY), 140–160 (FFSLFLPKNIPLWLAPIMVII), 181–201 (VAGHILLKIIAWSIVSLTWFF), and 206–226 (IALVIVLIGFELFISILQAYI).

This sequence belongs to the ATPase A chain family. F-type ATPases have 2 components, CF(1) - the catalytic core - and CF(0) - the membrane proton channel. CF(1) has five subunits: alpha(3), beta(3), gamma(1), delta(1), epsilon(1). CF(0) has three main subunits: a(1), b(2) and c(9-12). The alpha and beta chains form an alternating ring which encloses part of the gamma chain. CF(1) is attached to CF(0) by a central stalk formed by the gamma and epsilon chains, while a peripheral stalk is formed by the delta and b chains.

The protein localises to the cell inner membrane. Key component of the proton channel; it plays a direct role in the translocation of protons across the membrane. This is ATP synthase subunit a from Orientia tsutsugamushi (strain Boryong) (Rickettsia tsutsugamushi).